The sequence spans 372 residues: MEPEVKIERRKTRQVMVGNVPVGGDAPISVQSMTNSETCDVDATVGQIRRLQDAGVDIVRVSVPSMEAAEAFGKIRKQVDVPLVADIHYDYKIALAVAEQGVDCLRINPGNIGREDRIKAVIQCAKDKGLPIRIGVNAGSLEKELQRKYGEPTSDALVESALRHADILDRYDFQNFKVSVKASNVFMTLQAYRKLSSQLEQPLHLGVTEAGTFRSGTVKSAVALGALLMEGIGDTIRVSLAADPVEEVRVGFDILKSLNLRKKGVNIIACPSCSRQNFDVIKTVNELEARLEDINESVDLAVIGCLVNGPGEAREVDVGLTGGTPNNLAYRDGEKSHHITADDLVDELERMVRAKVKKQREDEEKGIIARSE.

Cysteine 270, cysteine 273, cysteine 305, and glutamate 312 together coordinate [4Fe-4S] cluster.

Belongs to the IspG family. [4Fe-4S] cluster is required as a cofactor.

It carries out the reaction (2E)-4-hydroxy-3-methylbut-2-enyl diphosphate + oxidized [flavodoxin] + H2O + 2 H(+) = 2-C-methyl-D-erythritol 2,4-cyclic diphosphate + reduced [flavodoxin]. Its pathway is isoprenoid biosynthesis; isopentenyl diphosphate biosynthesis via DXP pathway; isopentenyl diphosphate from 1-deoxy-D-xylulose 5-phosphate: step 5/6. Its function is as follows. Converts 2C-methyl-D-erythritol 2,4-cyclodiphosphate (ME-2,4cPP) into 1-hydroxy-2-methyl-2-(E)-butenyl 4-diphosphate. In Alcanivorax borkumensis (strain ATCC 700651 / DSM 11573 / NCIMB 13689 / SK2), this protein is 4-hydroxy-3-methylbut-2-en-1-yl diphosphate synthase (flavodoxin).